A 133-amino-acid polypeptide reads, in one-letter code: ATP synthase epsilon chain, chloroplastic (133 aa).

The protein belongs to the ATPase epsilon chain family. As to quaternary structure, F-type ATPases have 2 components, CF(1) - the catalytic core - and CF(0) - the membrane proton channel. CF(1) has five subunits: alpha(3), beta(3), gamma(1), delta(1), epsilon(1). CF(0) has three main subunits: a, b and c.

It localises to the plastid. The protein resides in the chloroplast thylakoid membrane. Produces ATP from ADP in the presence of a proton gradient across the membrane. This Helianthus annuus (Common sunflower) protein is ATP synthase epsilon chain, chloroplastic.